A 326-amino-acid chain; its full sequence is GATA zinc finger domain-containing protein 21 (326 aa).

Disordered stretches follow at residues 1–102 (MFRN…NNNN) and 145–238 (QNQS…TPER). 2 stretches are compositionally biased toward low complexity: residues 17-102 (NTNL…NNNN) and 148-164 (SSSS…GSSA). Over residues 165–189 (LNSINNNNYSPTTSSLNRVRNQYNQ) the composition is skewed to polar residues. Acidic residues predominate over residues 193–218 (DEEDDDYDNGAEDGFDYDGDDNEDGS). The segment at 239 to 266 (CSNCKITHSSYWRRITVNGQKLDFCNAC) adopts a GATA-type zinc-finger fold. Positions 277–326 (IKESKQRHSIQNIMNQNQEEEEEEREEEEEEEEEEDEEFETLEEEEEDDE) are disordered. Acidic residues predominate over residues 294–326 (QEEEEEEREEEEEEEEEEDEEFETLEEEEEDDE).

The sequence is that of GATA zinc finger domain-containing protein 21 (gtaU) from Dictyostelium discoideum (Social amoeba).